A 259-amino-acid polypeptide reads, in one-letter code: Diphthine synthase (259 aa).

Residues L9, D85, V88, 113–114 (TA), L168, A209, and H234 each bind S-adenosyl-L-methionine.

Belongs to the diphthine synthase family. In terms of assembly, homodimer.

The enzyme catalyses 2-[(3S)-amino-3-carboxypropyl]-L-histidyl-[translation elongation factor 2] + 3 S-adenosyl-L-methionine = diphthine-[translation elongation factor 2] + 3 S-adenosyl-L-homocysteine + 3 H(+). The protein operates within protein modification; peptidyl-diphthamide biosynthesis. Functionally, S-adenosyl-L-methionine-dependent methyltransferase that catalyzes the trimethylation of the amino group of the modified target histidine residue in translation elongation factor 2 (EF-2), to form an intermediate called diphthine. The three successive methylation reactions represent the second step of diphthamide biosynthesis. In Haloarcula marismortui (strain ATCC 43049 / DSM 3752 / JCM 8966 / VKM B-1809) (Halobacterium marismortui), this protein is Diphthine synthase.